A 180-amino-acid polypeptide reads, in one-letter code: Protein GrpE (180 aa).

It belongs to the GrpE family. In terms of assembly, homodimer.

It localises to the cytoplasm. Participates actively in the response to hyperosmotic and heat shock by preventing the aggregation of stress-denatured proteins, in association with DnaK and GrpE. It is the nucleotide exchange factor for DnaK and may function as a thermosensor. Unfolded proteins bind initially to DnaJ; upon interaction with the DnaJ-bound protein, DnaK hydrolyzes its bound ATP, resulting in the formation of a stable complex. GrpE releases ADP from DnaK; ATP binding to DnaK triggers the release of the substrate protein, thus completing the reaction cycle. Several rounds of ATP-dependent interactions between DnaJ, DnaK and GrpE are required for fully efficient folding. The sequence is that of Protein GrpE from Picrophilus torridus (strain ATCC 700027 / DSM 9790 / JCM 10055 / NBRC 100828 / KAW 2/3).